A 199-amino-acid polypeptide reads, in one-letter code: Shikimate kinase (199 aa).

Gly-32 to Ser-37 lines the ATP pocket. Thr-36 is a Mg(2+) binding site. The substrate site is built by Asp-54, Arg-78, and Gly-100. An ATP-binding site is contributed by Arg-138. Substrate is bound at residue Arg-157.

Belongs to the shikimate kinase family. Monomer. The cofactor is Mg(2+).

The protein resides in the cytoplasm. It catalyses the reaction shikimate + ATP = 3-phosphoshikimate + ADP + H(+). It functions in the pathway metabolic intermediate biosynthesis; chorismate biosynthesis; chorismate from D-erythrose 4-phosphate and phosphoenolpyruvate: step 5/7. Its function is as follows. Catalyzes the specific phosphorylation of the 3-hydroxyl group of shikimic acid using ATP as a cosubstrate. This is Shikimate kinase from Synechococcus sp. (strain CC9605).